A 171-amino-acid polypeptide reads, in one-letter code: Large ribosomal subunit protein bL9 (171 aa).

Belongs to the bacterial ribosomal protein bL9 family.

Its function is as follows. Binds to the 23S rRNA. This is Large ribosomal subunit protein bL9 from Rickettsia peacockii (strain Rustic).